The primary structure comprises 496 residues: Glycerol kinase (496 aa).

Thr12 contacts ADP. ATP is bound by residues Thr12, Thr13, and Ser14. Residue Thr12 participates in sn-glycerol 3-phosphate binding. Arg16 contributes to the ADP binding site. Arg82, Glu83, and Tyr134 together coordinate sn-glycerol 3-phosphate. Residues Arg82, Glu83, and Tyr134 each coordinate glycerol. Phosphohistidine; by HPr is present on His230. Asp244 contributes to the sn-glycerol 3-phosphate binding site. 2 residues coordinate glycerol: Asp244 and Gln245. Residues Thr266 and Gly309 each coordinate ADP. Positions 266, 309, 313, and 410 each coordinate ATP. Residues Gly410 and Asn414 each contribute to the ADP site.

This sequence belongs to the FGGY kinase family. As to quaternary structure, homotetramer and homodimer (in equilibrium). In terms of processing, the phosphoenolpyruvate-dependent sugar phosphotransferase system (PTS), including enzyme I, and histidine-containing protein (HPr) are required for the phosphorylation, which leads to the activation of the enzyme.

The catalysed reaction is glycerol + ATP = sn-glycerol 3-phosphate + ADP + H(+). The protein operates within polyol metabolism; glycerol degradation via glycerol kinase pathway; sn-glycerol 3-phosphate from glycerol: step 1/1. Activated by phosphorylation and inhibited by fructose 1,6-bisphosphate (FBP). Its function is as follows. Key enzyme in the regulation of glycerol uptake and metabolism. Catalyzes the phosphorylation of glycerol to yield sn-glycerol 3-phosphate. The sequence is that of Glycerol kinase from Bacillus subtilis (strain 168).